A 433-amino-acid polypeptide reads, in one-letter code: Serine hydroxymethyltransferase (433 aa).

(6S)-5,6,7,8-tetrahydrofolate contacts are provided by residues Leu-127 and 131–133 (GHL). Lys-236 is subject to N6-(pyridoxal phosphate)lysine.

This sequence belongs to the SHMT family. Homodimer. Pyridoxal 5'-phosphate is required as a cofactor.

Its subcellular location is the cytoplasm. The catalysed reaction is (6R)-5,10-methylene-5,6,7,8-tetrahydrofolate + glycine + H2O = (6S)-5,6,7,8-tetrahydrofolate + L-serine. It participates in one-carbon metabolism; tetrahydrofolate interconversion. The protein operates within amino-acid biosynthesis; glycine biosynthesis; glycine from L-serine: step 1/1. Its function is as follows. Catalyzes the reversible interconversion of serine and glycine with tetrahydrofolate (THF) serving as the one-carbon carrier. This reaction serves as the major source of one-carbon groups required for the biosynthesis of purines, thymidylate, methionine, and other important biomolecules. Also exhibits THF-independent aldolase activity toward beta-hydroxyamino acids, producing glycine and aldehydes, via a retro-aldol mechanism. The sequence is that of Serine hydroxymethyltransferase from Corynebacterium urealyticum (strain ATCC 43042 / DSM 7109).